A 557-amino-acid chain; its full sequence is Urocanate hydratase (557 aa).

The segment at 1-20 (MSNPRHNEREVRSPRGDELN) is disordered. NAD(+) contacts are provided by residues 52–53 (GG), glutamine 130, 176–178 (GMG), glutamate 196, arginine 201, 242–243 (NA), 263–267 (QTSAH), 273–274 (YL), and tyrosine 322. The active site involves cysteine 410. Glycine 492 is a binding site for NAD(+).

This sequence belongs to the urocanase family. It depends on NAD(+) as a cofactor.

The protein resides in the cytoplasm. The enzyme catalyses 4-imidazolone-5-propanoate = trans-urocanate + H2O. Its pathway is amino-acid degradation; L-histidine degradation into L-glutamate; N-formimidoyl-L-glutamate from L-histidine: step 2/3. In terms of biological role, catalyzes the conversion of urocanate to 4-imidazolone-5-propionate. This is Urocanate hydratase from Brucella melitensis biotype 2 (strain ATCC 23457).